Here is a 129-residue protein sequence, read N- to C-terminus: Small ribosomal subunit protein uS11 (129 aa).

This sequence belongs to the universal ribosomal protein uS11 family. As to quaternary structure, part of the 30S ribosomal subunit. Interacts with proteins S7 and S18. Binds to IF-3.

In terms of biological role, located on the platform of the 30S subunit, it bridges several disparate RNA helices of the 16S rRNA. Forms part of the Shine-Dalgarno cleft in the 70S ribosome. The polypeptide is Small ribosomal subunit protein uS11 (Rhodopseudomonas palustris (strain BisB18)).